A 92-amino-acid polypeptide reads, in one-letter code: RNA-binding protein Hfq (92 aa).

One can recognise a Sm domain in the interval 9–68; the sequence is DPFLNALRRERVPVSIYLVNGIKLQGQVESFDQFVILLKNTVSQMVYKHAISTVVPSRPF. Residues 73 to 82 show a composition bias toward polar residues; sequence HQATNAQAGY. Residues 73–92 are disordered; that stretch reads HQATNAQAGYNAQHDDGDEK.

It belongs to the Hfq family. In terms of assembly, homohexamer.

In terms of biological role, RNA chaperone that binds small regulatory RNA (sRNAs) and mRNAs to facilitate mRNA translational regulation in response to envelope stress, environmental stress and changes in metabolite concentrations. Also binds with high specificity to tRNAs. The chain is RNA-binding protein Hfq from Shewanella pealeana (strain ATCC 700345 / ANG-SQ1).